The sequence spans 54 residues: Large ribosomal subunit protein bL33 (54 aa).

This sequence belongs to the bacterial ribosomal protein bL33 family.

The sequence is that of Large ribosomal subunit protein bL33 from Corynebacterium diphtheriae (strain ATCC 700971 / NCTC 13129 / Biotype gravis).